The chain runs to 229 residues: Ras-related protein RABA6b (229 aa).

20 to 27 (GDSAVGKS) provides a ligand contact to GTP. The short motif at 42 to 50 (SKPTIGVDF) is the Effector region element. Residues 68 to 72 (DTAGQ), 126 to 129 (NKSD), and 156 to 157 (SA) each bind GTP. Residues C226 and C227 are each lipidated (S-geranylgeranyl cysteine).

This sequence belongs to the small GTPase superfamily. Rab family.

It is found in the cell membrane. Functionally, intracellular vesicle trafficking and protein transport. The chain is Ras-related protein RABA6b (RABA6B) from Arabidopsis thaliana (Mouse-ear cress).